The primary structure comprises 101 residues: Chaperone modulatory protein CbpM (101 aa).

This sequence belongs to the CbpM family.

In terms of biological role, interacts with CbpA and inhibits both the DnaJ-like co-chaperone activity and the DNA binding activity of CbpA. Together with CbpA, modulates the activity of the DnaK chaperone system. Does not inhibit the co-chaperone activity of DnaJ. This is Chaperone modulatory protein CbpM from Escherichia coli (strain K12 / MC4100 / BW2952).